Reading from the N-terminus, the 185-residue chain is MIDEALFDAEEKMEKAVSVAREDMATIRTGRANPGMFSRIVIDYYGTHTPITQLASINVPEARMVVIKPYEANQLHAIETAIRNSDLGVNPTNDGTIIRVAVPQLTEERRRDLVKQAKHKGEEARVSVRNIRRKAMEELHRIRKDGEAGEDEVARAEKDLDKSTHQYVAQIDELVKHKEGELLEV.

The interval 143-163 is disordered; that stretch reads RKDGEAGEDEVARAEKDLDKS.

It belongs to the RRF family.

It is found in the cytoplasm. Responsible for the release of ribosomes from messenger RNA at the termination of protein biosynthesis. May increase the efficiency of translation by recycling ribosomes from one round of translation to another. This is Ribosome-recycling factor from Mycobacterium marinum (strain ATCC BAA-535 / M).